The sequence spans 1298 residues: Activating molecule in BECN1-regulated autophagy protein 1 (1298 aa).

The tract at residues 1 to 22 is interaction with DDB1; that stretch reads MKVVPEKNAVRILWGRERGARA. Lys45 is covalently cross-linked (Glycyl lysine isopeptide (Lys-Gly) (interchain with G-Cter in ubiquitin)). 3 WD repeats span residues 51-90, 93-133, and 135-175; these read DSPRSTFLLAFSPDRTLLASTHVNHNIYITEVKTGKCVHS, GHRR…ESWF, and DSNN…AVVK. Ser52 carries the phosphoserine; by MTOR modification. The span at 254–266 shows a compositional bias: polar residues; the sequence is IQVGEQSTVQDSA. A disordered region spans residues 254–284; the sequence is IQVGEQSTVQDSATPSPPPPPPQPSTERPRT. The segment covering 268-277 has biased composition (pro residues); that stretch reads PSPPPPPPQP. The short motif at 275–281 is the PxP motif 1 element; it reads PQPSTER. Position 328 is a phosphoserine (Ser328). The segment at 343-413 is disordered; that stretch reads FVQTEPFHPP…SRYHREIAPG (71 aa). Over residues 354-385 the composition is skewed to polar residues; sequence QASSTQQDQGLLNRPSAFSTVQSSTAGNTLRN. Ser394 and Ser443 each carry phosphoserine. Polar residues-rich tracts occupy residues 458–467, 547–561, and 590–601; these read SQASVYTSAT, HQPTPHSSENNSNLS, and NYSSGEASSSWQ. Disordered regions lie at residues 458 to 494, 538 to 561, 590 to 690, and 747 to 796; these read SQASVYTSATEGRGFPASGLATESDGGNGSSQNNSGS, IESERPGPSHQPTPHSSENNSNLS, NYSS…DSLR, and RYQQ…NARM. Low complexity-rich tracts occupy residues 602–614 and 628–639; these read VPSSFESVPSSGS and SSSRLELSSSAS. Phosphoserine is present on residues Ser635 and Ser639. Polar residues predominate over residues 661 to 674; the sequence is YTQSSRSGTVSQEA. Arg747 is subject to Asymmetric dimethylarginine. Over residues 772 to 781 the composition is skewed to acidic residues; it reads TDLEFEDFED. A Phosphoserine; by IKKA modification is found at Ser1043. The short motif at 1043–1052 is the LIR element; sequence SGVEYYWDQL. Polar residues predominate over residues 1060–1075; it reads HSNSRSSERPGTSRAT. The segment at 1060–1079 is disordered; the sequence is HSNSRSSERPGTSRATWRTD. 2 consecutive short sequence motifs (TQT motif) follow at residues 1104 to 1106 and 1116 to 1118; these read TQT. 3 disordered regions span residues 1112–1143, 1190–1214, and 1227–1298; these read QNAETQTEREVPEPGTAASGPGEGEGSEYGAS, RSSQTGTEPGAAHTSSPQPSTSRGL, and SPRT…PRNR. Positions 1191–1212 are enriched in polar residues; sequence SSQTGTEPGAAHTSSPQPSTSR. Position 1205 is a phosphoserine (Ser1205). The PxP motif 2 motif lies at 1206–1212; sequence PQPSTSR.

Belongs to the WD repeat AMBRA1 family. In terms of assembly, component of the DCX(AMBRA1) E3 ubiquitin ligase complex, also named CRL4(AMBRA1), at least composed of CUL4 (CUL4A or CUL4B), DDB1, AMBRA1 and RBX1. Interacts with BECN1. Probably forms a complex with BECN1 and PIK3C3. Interacts with BECN2. Interacts with BCL2; leading to prevent interaction with BCN1 and autophagy, interaction is disrupted upon autophagy induction. Interacts with ULK1. Interacts (via PxP motifs) with PPP2CA; enhancing interaction between PPP2CA and MYC or FOXO3. Forms a complex with PPP2CA and BECN1; AMBRA1 and BECN1 components of the complex regulate MYC stability via different pathways. Interacts (TQT motifs) with DYNLL1 and DYNLL2; tethering AMBRA1 and the BECN1-PIK3C3 complex in absence of autophagy. Interacts with TRAF6; interaction is required to mediate 'Lys-63'-linked ubiquitination of ULK1. Interacts with TRIM32; promoting activation of ULK1 by TRIM32 via unanchored 'Lys-63'-linked polyubiquitin chains. Interacts with PRKN. Interacts (via LIR motif) with LC3 (MAP1LC3A, MAP1LC3B or MAP1LC3C). Interacts with HUWE1. Interacts with PTK2/FAK. Interacts with SRC; required for SRC trafficking to autophagosomes. Phosphorylation at Ser-52 by MTOR inhibits its ability to regulate autophagy and mediate ubiquitination of ULK1. Phosphorylation by ULK1 in response to autophagy induction abolishes interaction with DYNLL1 and DYNLL2, releasing AMBRA1 from the cytoskeletal docking site to induce autophagosome nucleation. Phosphorylation by MTOR inhibits interaction with PPP2CA and subsequent dephosphorylation of MYC. Phosphorylation at Ser-1043 by CHUK/IKKA promotes its interaction with ATG8 family proteins GABARAP and MAP1LC3B and its mitophagic activity. Post-translationally, ubiquitinated by RNF2 via 'Lys-48'-linkage in unstressed cells, leading to its degradation by the proteasome. Induction of autophagy promotes stabilization via interaction with CUL4 (CUL4A or CUL4B) and DDB1. Upon prolonged starvation, ubiquitinated and degraded, terminating the autophagy response. In terms of processing, undergoes proteolytic processing by caspase-6 (CASP6), caspase-7 (CASP7) and caspase-8 (CASP8) during apoptosis, resulting in the dismantling of the autophagic machinery and the accomplishment of the programmed cell death program. Also cleaved by calpains during apoptosis, which mediate a complete proteolytic degradation.

The protein localises to the endoplasmic reticulum. Its subcellular location is the cytoplasm. The protein resides in the cytoskeleton. It localises to the cytoplasmic vesicle. It is found in the autophagosome. The protein localises to the mitochondrion. Its subcellular location is the cytosol. The protein resides in the nucleus. It localises to the cell junction. It is found in the focal adhesion. It participates in protein modification; protein ubiquitination. In terms of biological role, substrate-recognition component of a DCX (DDB1-CUL4-X-box) E3 ubiquitin-protein ligase complex involved in cell cycle control and autophagy. The DCX(AMBRA1) complex specifically mediates the polyubiquitination of target proteins such as BECN1, CCND1, CCND2, CCND3, ELOC and ULK1. Acts as an upstream master regulator of the transition from G1 to S cell phase: AMBRA1 specifically recognizes and binds phosphorylated cyclin-D (CCND1, CCND2 and CCND3), leading to cyclin-D ubiquitination by the DCX(AMBRA1) complex and subsequent degradation. By controlling the transition from G1 to S phase and cyclin-D degradation, AMBRA1 acts as a tumor suppressor that promotes genomic integrity during DNA replication and counteracts developmental abnormalities and tumor growth. AMBRA1 also regulates the cell cycle by promoting MYC dephosphorylation and degradation independently of the DCX(AMBRA1) complex: acts via interaction with the catalytic subunit of protein phosphatase 2A (PPP2CA), which enhances interaction between PPP2CA and MYC, leading to MYC dephosphorylation and degradation. Acts as a regulator of Cul5-RING (CRL5) E3 ubiquitin-protein ligase complexes by mediating ubiquitination and degradation of Elongin-C (ELOC) component of CRL5 complexes. Acts as a key regulator of autophagy by modulating the BECN1-PIK3C3 complex: controls protein turnover during neuronal development, and regulates normal cell survival and proliferation. In normal conditions, AMBRA1 is tethered to the cytoskeleton via interaction with dyneins DYNLL1 and DYNLL2. Upon autophagy induction, AMBRA1 is released from the cytoskeletal docking site to induce autophagosome nucleation by mediating ubiquitination of proteins involved in autophagy. The DCX(AMBRA1) complex mediates 'Lys-63'-linked ubiquitination of BECN1, increasing the association between BECN1 and PIK3C3 to promote PIK3C3 activity. In collaboration with TRAF6, AMBRA1 mediates 'Lys-63'-linked ubiquitination of ULK1 following autophagy induction, promoting ULK1 stability and kinase activity. Also activates ULK1 via interaction with TRIM32: TRIM32 stimulates ULK1 through unanchored 'Lys-63'-linked polyubiquitin chains. Also acts as an activator of mitophagy via interaction with PRKN and LC3 proteins (MAP1LC3A, MAP1LC3B or MAP1LC3C); possibly by bringing damaged mitochondria onto autophagosomes. Also activates mitophagy by acting as a cofactor for HUWE1; acts by promoting HUWE1-mediated ubiquitination of MFN2. AMBRA1 is also involved in regulatory T-cells (Treg) differentiation by promoting FOXO3 dephosphorylation independently of the DCX(AMBRA1) complex: acts via interaction with PPP2CA, which enhances interaction between PPP2CA and FOXO3, leading to FOXO3 dephosphorylation and stabilization. May act as a regulator of intracellular trafficking, regulating the localization of active PTK2/FAK and SRC. Also involved in transcription regulation by acting as a scaffold for protein complexes at chromatin. The polypeptide is Activating molecule in BECN1-regulated autophagy protein 1 (Homo sapiens (Human)).